The chain runs to 932 residues: Adhesion G protein-coupled receptor E2 (932 aa).

Positions 1 to 15 (MWGFWLLLFWGFSGT) are cleaved as a signal peptide. The Extracellular segment spans residues 16–652 (HRWGMTTLAI…TMEFSLYIIS (637 aa)). EGF-like domains lie at 32-69 (GVNE…SNGQ) and 81-119 (DVNE…SAGG). Intrachain disulfides connect C36/C48, C42/C57, C85/C98, C92/C107, C137/C149, C143/C158, C160/C171, C177/C189, C183/C198, C226/C239, and C233/C248. Residues 133–172 (DVDECLTIGICPKNSNCSNSVGSYSCTCQSGFVSNGSTCE) form the EGF-like 3; calcium-binding domain. 2 N-linked (GlcNAc...) asparagine glycosylation sites follow: N148 and N167. The 38-residue stretch at 173–210 (DEDECVTRNACPEHATCHNTLGSYYCTCNEGLEFSGGG) folds into the EGF-like 4; calcium-binding domain. Residues 222 to 260 (DVDECSRNSTLCGPSFICINTLGSYSCSCPAGFSLSTFQ) form the EGF-like 5; calcium-binding domain. An N-linked (GlcNAc...) asparagine glycan is attached at N229. N-linked (GlcNAc...) asparagine glycans are attached at residues N269, N283, N309, N333, N344, N363, N405, N417, N474, and N499. In terms of domain architecture, EGF-like 6; calcium-binding spans 272–307 (DIDECDDICPSNSSCTNTLGSYFCTCHPGFASSNGQ). 2 cysteine pairs are disulfide-bonded: C276–C286 and C280–C295. One can recognise an EGF-like 7; calcium-binding domain in the interval 319–354 (DIDECTQDPFRCGRNSSCTNVPGSYNCSCLPDFRMD). 2 disulfides stabilise this stretch: C323-C336 and C330-C345. The region spanning 482 to 643 (EYLEIESKVI…AIIMASGELT (162 aa)) is the GAIN-B domain. The Cell attachment site motif lies at 507–509 (RGD). 2 disulfide bridges follow: C596–C625 and C613–C627. Residues 596–643 (CVSWNTDVEDGRWTPSGCETVEASETHTVCSCNRMTNLAIIMASGELT) form a GPS region. Residues 653–673 (YVGTVISLVCLALAIATFLLF) form a helical membrane-spanning segment. The Cytoplasmic portion of the chain corresponds to 674 to 681 (RAVQNHNT). A helical transmembrane segment spans residues 682 to 702 (YLHLHLCVCLFLAKILFLTGI). Topologically, residues 703-719 (DKTDNQTACAIIAGFLH) are extracellular. N-linked (GlcNAc...) asparagine glycosylation is present at N707. Residues 720–740 (YLFLACFFWMLVEAVMLFLMV) traverse the membrane as a helical segment. Residues 741 to 756 (RNLKVVNYFSSRNIKM) are Cytoplasmic-facing. A helical membrane pass occupies residues 757 to 777 (LHLCAFGYGLPVVVVIISATV). Topologically, residues 778 to 795 (HPWGYGMHNRCWLNTETG) are extracellular. Residues 796–816 (FIWSFLGPVCMIITINSALLA) form a helical membrane-spanning segment. Residues 817 to 849 (WTLWVLRQKLCSVNSEVSKLKDTRLLTFKAIAQ) lie on the Cytoplasmic side of the membrane. The chain crosses the membrane as a helical span at residues 850-870 (IFILGCSWVLGIFQIGPLASI). Residues 871-872 (MA) lie on the Extracellular side of the membrane. The helical transmembrane segment at 873-893 (YLFTTINSLQGAFIFLIHCLL) threads the bilayer. Over 894-932 (NRQVRDEYRKLLTRKTDLSSHSQTSGILLSSMPSTSKTG) the chain is Cytoplasmic.

Belongs to the G-protein coupled receptor 2 family. Adhesion G-protein coupled receptor (ADGR) subfamily.

It is found in the cell membrane. Orphan receptor involved in cell adhesion and probably in cell-cell interactions involved specifically cells of the immune system. May play a role in regulatory T-cells (Treg) development. The polypeptide is Adhesion G protein-coupled receptor E2 (Adgre1) (Rattus norvegicus (Rat)).